The sequence spans 234 residues: Orotate phosphoribosyltransferase (234 aa).

A 5-phospho-alpha-D-ribose 1-diphosphate-binding site is contributed by Lys37. Position 45 to 46 (45 to 46 (FF)) interacts with orotate. 5-phospho-alpha-D-ribose 1-diphosphate contacts are provided by residues 83-84 (YK), Arg109, Lys110, Lys113, His115, and 134-142 (DDVISAGTS). Orotate-binding residues include Ser138 and Arg166.

Belongs to the purine/pyrimidine phosphoribosyltransferase family. PyrE subfamily. Homodimer. It depends on Mg(2+) as a cofactor.

The enzyme catalyses orotidine 5'-phosphate + diphosphate = orotate + 5-phospho-alpha-D-ribose 1-diphosphate. The protein operates within pyrimidine metabolism; UMP biosynthesis via de novo pathway; UMP from orotate: step 1/2. In terms of biological role, catalyzes the transfer of a ribosyl phosphate group from 5-phosphoribose 1-diphosphate to orotate, leading to the formation of orotidine monophosphate (OMP). The chain is Orotate phosphoribosyltransferase from Methylibium petroleiphilum (strain ATCC BAA-1232 / LMG 22953 / PM1).